Consider the following 440-residue polypeptide: tRNA(Ile)-lysidine synthase (440 aa).

19–24 is an ATP binding site; that stretch reads SGGLDS.

It belongs to the tRNA(Ile)-lysidine synthase family.

Its subcellular location is the cytoplasm. It carries out the reaction cytidine(34) in tRNA(Ile2) + L-lysine + ATP = lysidine(34) in tRNA(Ile2) + AMP + diphosphate + H(+). Ligates lysine onto the cytidine present at position 34 of the AUA codon-specific tRNA(Ile) that contains the anticodon CAU, in an ATP-dependent manner. Cytidine is converted to lysidine, thus changing the amino acid specificity of the tRNA from methionine to isoleucine. The chain is tRNA(Ile)-lysidine synthase from Buchnera aphidicola subsp. Acyrthosiphon pisum (strain APS) (Acyrthosiphon pisum symbiotic bacterium).